The sequence spans 240 residues: MSLFPSLHLLLLIVMTASHTETENCEDIQNTCLVISCDSPGINGLPGKDGLDGAKGEKGEPGQGLIGLQGLPGMVGPQGSPGIPGLPGLKGQKGDSGIDPGNSLANLRSELDNIKKWLIFAQGKQVGKKLYLTNGKKMSFNGVKALCAQFQASVATPTNSRENQAIQELAGTEAFLGITDEYTEGQFVDLTGKRVRYQNWNDGEPNNADSAEHCVEILKDGKWNDIFCSSQLSAVCEFPA.

Residues 1–18 form the signal peptide; it reads MSLFPSLHLLLLIVMTAS. Collagen-like domains lie at 39–61 and 67–97; these read SPGI…KGEP and GLQG…GDSG. Pro46 bears the Hydroxyproline mark. Residues 48-102 are disordered; that stretch reads KDGLDGAKGEKGEPGQGLIGLQGLPGMVGPQGSPGIPGLPGLKGQKGDSGIDPGN. The span at 49 to 60 shows a compositional bias: basic and acidic residues; it reads DGLDGAKGEKGE. Pro72, Pro81, and Pro87 each carry hydroxyproline. A coiled-coil region spans residues 104–122; it reads LANLRSELDNIKKWLIFAQ. A C-type lectin domain is found at 126–237; sequence VGKKLYLTNG…CSSQLSAVCE (112 aa). Disulfide bonds link Cys147-Cys236 and Cys214-Cys228.

In terms of assembly, interacts with MASP1 and MASP2. Interacts with MEP1A and MEP1B and may inhibit their catalytic activity. Forms oligomeric complexes of 2 or 3 homotrimers. As to expression, expressed in liver. Weakly expressed in kidney and testis.

It is found in the secreted. In terms of biological role, calcium-dependent lectin involved in innate immune defense. Binds mannose, fucose and N-acetylglucosamine on different microorganisms and activates the lectin complement pathway. Binds to late apoptotic cells, as well as to apoptotic blebs and to necrotic cells, but not to early apoptotic cells, facilitating their uptake by macrophages. According to some authors, it only binds mannose. In Sus scrofa (Pig), this protein is Mannose-binding protein C.